Here is a 406-residue protein sequence, read N- to C-terminus: MSSRVGDLSPQQQEALARFRENLQDLLPILPNADDYFLLRWLRARNFDLQKSEDMLRRHMEFRKQQDLDNIVTWQPPEVIQLYDSGGLCGYDYEGCPVYFNIIGSLDPKGLLLSASKQDMIRKRIKVCELLLHECELQTQKLGRKIEMALMVFDMEGLSLKHLWKPAVEVYQQFFSILEANYPETLKNLIVIRAPKLFPVAFNLVKSFMSEETRRKIVILGDNWKQELTKFISPDQLPVEFGGTMTDPDGNPKCLTKINYGGEVPKSYYLCEQVRLQYEHTRSVGRGSSLQVENEILFPGCVLRWQFASDGGDIGFGVFLKTKMGEQQSAREMTEVLPSQRYNAHMVPEDGSLTCLQAGVYVLRFDNTYSRMHAKKLSYTVEVLLPDKASEETLQSLKAMRPSPTQ.

A CRAL-TRIO domain is found at 76–249; that stretch reads PPEVIQLYDS…EFGGTMTDPD (174 aa). Positions 252-383 constitute a GOLD domain; it reads PKCLTKINYG…AKKLSYTVEV (132 aa).

Its function is as follows. Probable hydrophobic ligand-binding protein; may play a role in the transport of hydrophobic ligands like tocopherol, squalene and phospholipids. In Homo sapiens (Human), this protein is SEC14-like protein 4 (SEC14L4).